Reading from the N-terminus, the 441-residue chain is Chitinase-like protein Idgf3 (441 aa).

A signal peptide spans 1–23 (MTGSLWLSLALSLAVLAQFKVSA). The region spanning 25–441 (PNLVCFYDSQ…MLRAIKYRLL (417 aa)) is the GH18 domain. Cysteine 29 and cysteine 56 form a disulfide bridge. The N-linked (GlcNAc...) asparagine glycan is linked to asparagine 221. Residues 307 to 331 (KDSGDSGMPVVPSTQGPAPAGPQSK) are disordered. Cysteines 342 and 425 form a disulfide.

This sequence belongs to the glycosyl hydrolase 18 family. IDGF subfamily. In terms of processing, glycosylated. In terms of tissue distribution, primarily expressed in yolk cells and fat body. In larvae, it is expressed in small and large salivary gland cells, and weakly expressed in imaginal disks. Less expressed than Idgf2 and Idgf4.

The protein resides in the secreted. Functionally, cooperates with insulin-like peptides to stimulate the proliferation, polarization and motility of imaginal disk cells. May act by stabilizing the binding of insulin-like peptides to its receptor through a simultaneous interaction with both molecules to form a multiprotein signaling complex. This Drosophila melanogaster (Fruit fly) protein is Chitinase-like protein Idgf3 (Idgf3).